A 231-amino-acid polypeptide reads, in one-letter code: Large ribosomal subunit protein uL1 (231 aa).

It belongs to the universal ribosomal protein uL1 family. In terms of assembly, part of the 50S ribosomal subunit.

Binds directly to 23S rRNA. The L1 stalk is quite mobile in the ribosome, and is involved in E site tRNA release. In terms of biological role, protein L1 is also a translational repressor protein, it controls the translation of the L11 operon by binding to its mRNA. This chain is Large ribosomal subunit protein uL1, found in Polaromonas sp. (strain JS666 / ATCC BAA-500).